The following is a 202-amino-acid chain: Probable nicotinate-nucleotide adenylyltransferase (202 aa).

Belongs to the NadD family.

The enzyme catalyses nicotinate beta-D-ribonucleotide + ATP + H(+) = deamido-NAD(+) + diphosphate. It participates in cofactor biosynthesis; NAD(+) biosynthesis; deamido-NAD(+) from nicotinate D-ribonucleotide: step 1/1. Its function is as follows. Catalyzes the reversible adenylation of nicotinate mononucleotide (NaMN) to nicotinic acid adenine dinucleotide (NaAD). The chain is Probable nicotinate-nucleotide adenylyltransferase from Clostridium perfringens (strain SM101 / Type A).